Here is a 1239-residue protein sequence, read N- to C-terminus: Potassium channel subfamily T member 1 (1239 aa).

The disordered stretch occupies residues 1–45 (MARAKLPRSPSEGKAGPGDTPAGSAAPEEPHGLSPLLPTRGGGSV). Residues 1 to 93 (MARAKLPRSP…LFFIKNQRSS (93 aa)) are Cytoplasmic-facing. A helical membrane pass occupies residues 94–126 (LRIRLFNFSLKLLTCLLYIVRVLLDNPDQGIGC). Topologically, residues 127-153 (WGCTKYNYTFNGSSSEFHWAPILWVER) are extracellular. N-linked (GlcNAc...) asparagine glycosylation is found at asparagine 133 and asparagine 137. A helical transmembrane segment spans residues 154–178 (KMALWVIQVIVATISFLETMLLIYL). Topologically, residues 179–192 (SYKGNIWEQIFHVS) are cytoplasmic. A helical membrane pass occupies residues 193–208 (FVLEMINTLPFIITVF). Over 209–215 (WPPLRNL) the chain is Extracellular. A helical transmembrane segment spans residues 216 to 233 (FIPVFLNCWLAKHALENM). Over 234-246 (INDFHRAILRTQS) the chain is Cytoplasmic. A helical membrane pass occupies residues 247 to 274 (AMFNQVLILFCTLLCLVFTGTCGIQHLE). The Extracellular portion of the chain corresponds to 275 to 281 (RAGGNLN). The pore-forming intramembrane region spans 282–302 (LLTSFYFCIVTFSTVGFGDVT). K(+) contacts are provided by valine 296 and glycine 297. Over 303-304 (PK) the chain is Extracellular. Residues 305–338 (IWPSQLLVVILICVTLVVLPLQFEELVYLWMERQ) form a helical membrane-spanning segment. Residues 339-1239 (KSGGNYSRHR…NPETRDETQL (901 aa)) are Cytoplasmic-facing. The region spanning 352–488 (EKHVVLCVSS…FHVKFADHVV (137 aa)) is the RCK N-terminal 1 domain. Positions 513, 516, 538, and 540 each coordinate Na(+). A disordered region spans residues 658 to 689 (QNTDCRPSQGGSGGGGGKLTLPTENGSGSRRP). Residues cysteine 758 and cysteine 759 each contribute to the Zn(2+) site. The K(+) site is built by arginine 761 and lysine 764. Na(+)-binding residues include arginine 761 and lysine 764. 2 residues coordinate Zn(2+): cysteine 766 and histidine 768. 4 residues coordinate K(+): asparagine 769, tyrosine 771, tyrosine 777, and glycine 778. Tyrosine 771 contacts Na(+). Phenylalanine 779 serves as a coordination point for Na(+). The RCK N-terminal 2 domain maps to 781-921 (NKLIIVSAET…QFRAKDSYSL (141 aa)). 5 residues coordinate K(+): serine 787, leucine 818, aspartate 820, glycine 842, and aspartate 865. Disordered stretches follow at residues 1053-1081 (REAKGPWGTRAASGGGSTHGRHGGSADPV) and 1212-1239 (TSSSQSRKSSCSNKLSSCNPETRDETQL). A compositionally biased stretch (low complexity) spans 1213 to 1230 (SSSQSRKSSCSNKLSSCN).

It belongs to the potassium channel family. Calcium-activated (TC 1.A.1.3) subfamily. KCa4.1/KCNT1 sub-subfamily. In terms of assembly, homotetramer; which constitutes the Na(+)-activated K(+) channel. Interacts with KCNT2; these heterodimer channels differ from the homomers in their unitary conductance, kinetic behavior, subcellular localization, and response to activation of protein kinase C. Interacts (via C-terminus) with FMR1; this interaction alters gating properties of KCNT1. Interacts with CRBN via its cytoplasmic C-terminus. Does not interact with KCNT2. Post-translationally, phosphorylated by protein kinase C. Phosphorylation of the C-terminal domain increases channel activity. As to expression, detected in brain and brainstem, in vestibular and oculomotor nuclei, the medial nucleus of the trapezoid in the auditory system, in olfactory bulb, red nucleus, and deep cerebellar nuclei. Detected in thalamus, substantia nigra, and amygdala (at protein level). Highly expressed in the brain and kidney.

It is found in the cell membrane. It catalyses the reaction K(+)(in) = K(+)(out). Its activity is regulated as follows. Activated by high intracellular Na(+) level. In addition to activation by Na(+), is cooperatively activated by intracellular Cl(-) levels. Activated upon stimulation of G-protein coupled receptors, such as CHRM1 and GRIA1. Functionally, sodium-activated K(+) channel. Acts as an important mediator of neuronal membrane excitability. Contributes to the delayed outward currents. Regulates neuronal bursting in sensory neurons. Contributes to synaptic development and plasticity. The protein is Potassium channel subfamily T member 1 (Kcnt1) of Rattus norvegicus (Rat).